The chain runs to 458 residues: Argininosuccinate lyase (458 aa).

It belongs to the lyase 1 family. Argininosuccinate lyase subfamily.

Its subcellular location is the cytoplasm. The enzyme catalyses 2-(N(omega)-L-arginino)succinate = fumarate + L-arginine. The protein operates within amino-acid biosynthesis; L-arginine biosynthesis; L-arginine from L-ornithine and carbamoyl phosphate: step 3/3. This chain is Argininosuccinate lyase, found in Citrifermentans bemidjiense (strain ATCC BAA-1014 / DSM 16622 / JCM 12645 / Bem) (Geobacter bemidjiensis).